Here is a 566-residue protein sequence, read N- to C-terminus: NAD-dependent malic enzyme (566 aa).

Tyrosine 105 (proton donor) is an active-site residue. Residue arginine 158 coordinates NAD(+). Lysine 176 serves as the catalytic Proton acceptor. A divalent metal cation contacts are provided by glutamate 247, aspartate 248, and aspartate 271. Positions 271 and 419 each coordinate NAD(+).

This sequence belongs to the malic enzymes family. In terms of assembly, homotetramer. Requires Mg(2+) as cofactor. The cofactor is Mn(2+).

The catalysed reaction is (S)-malate + NAD(+) = pyruvate + CO2 + NADH. The enzyme catalyses oxaloacetate + H(+) = pyruvate + CO2. The sequence is that of NAD-dependent malic enzyme from Acinetobacter baylyi (strain ATCC 33305 / BD413 / ADP1).